Reading from the N-terminus, the 93-residue chain is YcgL domain-containing protein Shew_2183 (93 aa).

One can recognise a YcgL domain in the interval 1–85; it reads MICAVYKSRL…PPVNLLEEYK (85 aa).

The protein is YcgL domain-containing protein Shew_2183 of Shewanella loihica (strain ATCC BAA-1088 / PV-4).